Here is a 144-residue protein sequence, read N- to C-terminus: Large ribosomal subunit protein uL15 (144 aa).

The segment at 1 to 44 is disordered; that stretch reads MNLNELQPAAGSRKLRNRVGRGTSSGNGKTSGRGQKGQKARGKV. Over residues 23-35 the composition is skewed to gly residues; it reads TSSGNGKTSGRGQ.

This sequence belongs to the universal ribosomal protein uL15 family. Part of the 50S ribosomal subunit.

Its function is as follows. Binds to the 23S rRNA. The chain is Large ribosomal subunit protein uL15 from Leuconostoc citreum (strain KM20).